A 247-amino-acid chain; its full sequence is Cell division protein ZapD (247 aa).

This sequence belongs to the ZapD family. In terms of assembly, interacts with FtsZ.

It is found in the cytoplasm. Its function is as follows. Cell division factor that enhances FtsZ-ring assembly. Directly interacts with FtsZ and promotes bundling of FtsZ protofilaments, with a reduction in FtsZ GTPase activity. The protein is Cell division protein ZapD of Shigella sonnei (strain Ss046).